Consider the following 505-residue polypeptide: Exodeoxyribonuclease 7 large subunit (505 aa).

Residues 466-505 (SGDRDAVIDGEGGPAPAPTAPAPKPRPKPAAPPAGQGDLF) form a disordered region. A compositionally biased stretch (pro residues) spans 480–497 (APAPTAPAPKPRPKPAAP).

This sequence belongs to the XseA family. In terms of assembly, heterooligomer composed of large and small subunits.

Its subcellular location is the cytoplasm. It catalyses the reaction Exonucleolytic cleavage in either 5'- to 3'- or 3'- to 5'-direction to yield nucleoside 5'-phosphates.. Its function is as follows. Bidirectionally degrades single-stranded DNA into large acid-insoluble oligonucleotides, which are then degraded further into small acid-soluble oligonucleotides. The protein is Exodeoxyribonuclease 7 large subunit of Caulobacter vibrioides (strain NA1000 / CB15N) (Caulobacter crescentus).